Here is an 830-residue protein sequence, read N- to C-terminus: ABC transporter G family member STR (830 aa).

Residues 1–551 (MAKFKRTDTN…RTTLNVIRTP (551 aa)) lie on the Cytoplasmic side of the membrane. The ABC transporter domain maps to 46 to 297 (LEFNNLSYSV…LAGFARPVPD (252 aa)). 90-97 (GPSGAGKS) is a binding site for ATP. Disordered regions lie at residues 333–356 (DQAAKTPVRKPPKTPKIPRTPYAK), 368–422 (SHFS…SMQS), and 471–491 (SMSSSQFSMTQQTPGPGNKTP). A compositionally biased stretch (polar residues) spans 368–378 (SHFSTGNMNSQ). Acidic residues predominate over residues 395-405 (DYEDDDDEDEF). The span at 471-483 (SMSSSQFSMTQQT) shows a compositional bias: low complexity. The helical transmembrane segment at 552 to 572 (ELFLSREIVLTVMGLVLSSFF) threads the bilayer. Topologically, residues 573-588 (KKLSHFDFKTINHLLN) are extracellular. Residues 589–609 (FYIFTICLVFFSSNDAVPTFI) form a helical membrane-spanning segment. The Cytoplasmic segment spans residues 610–630 (QERFIFIRETSHNAYRASSYV). A helical transmembrane segment spans residues 631–651 (ISSLIVYLPFFAIQGFTFAGI). Topologically, residues 652 to 661 (TQYILHLNSS) are extracellular. Asparagine 659 carries an N-linked (GlcNAc...) asparagine glycan. Residues 662 to 682 (ILSFWLILYSSLVTSNAYVML) traverse the membrane as a helical segment. Residues 683–690 (VSALVPSY) are Cytoplasmic-facing. The chain crosses the membrane as a helical span at residues 691 to 711 (ITGYAVVIATTALFFLTCGFF). Residues 712 to 798 (LKRTQIPLVW…LFSMDIREEN (87 aa)) are Extracellular-facing. 2 N-linked (GlcNAc...) asparagine glycosylation sites follow: asparagine 771 and asparagine 780. Residues 799–819 (IWLDIVILLAWGVLYRLFFYV) form a helical membrane-spanning segment. Topologically, residues 820–830 (VLRFYSKNERK) are cytoplasmic.

Belongs to the ABC transporter superfamily. ABCG family. Stunted arbuscule (STR) subfamily. As to quaternary structure, heterodimerizes with STR2; the resulting transporter is located in the peri-arbuscular membrane.

It is found in the cell membrane. Together with STR2, required for arbuscule development in arbuscular mycorrhizal (AM) symbiosis. The protein is ABC transporter G family member STR of Petunia hybrida (Petunia).